The sequence spans 308 residues: Isoaspartyl peptidase/L-asparaginase (308 aa).

Met-1 carries the N-acetylmethionine modification. The Nucleophile role is filled by Thr-168. Residues Arg-196 to Asp-199 and Thr-219 to Gly-222 contribute to the substrate site.

Belongs to the Ntn-hydrolase family. As to quaternary structure, heterodimer of an alpha and beta chain produced by autocleavage. This heterodimer may then dimerize in turn, giving rise to a heterotetramer. In terms of processing, cleaved into an alpha and beta chain by autocatalysis; this activates the enzyme. The N-terminal residue of the beta subunit is responsible for the nucleophile hydrolase activity. As to expression, expressed in brain, kidney, testis and tissues of the gastrointestinal tract. Present in sperm (at protein level). Over-expressed in uterine, mammary, prostatic and ovarian carcinoma.

It localises to the cytoplasm. It carries out the reaction L-asparagine + H2O = L-aspartate + NH4(+). The catalysed reaction is Cleavage of a beta-linked Asp residue from the N-terminus of a polypeptide.. Glycine accelerates autocleavage into an alpha and beta chain. Has both L-asparaginase and beta-aspartyl peptidase activity. May be involved in the production of L-aspartate, which can act as an excitatory neurotransmitter in some brain regions. Is highly active with L-Asp beta-methyl ester. Besides, has catalytic activity toward beta-aspartyl dipeptides and their methyl esters, including beta-L-Asp-L-Phe, beta-L-Asp-L-Phe methyl ester (aspartame), beta-L-Asp-L-Ala, beta-L-Asp-L-Leu and beta-L-Asp-L-Lys. Does not have aspartylglucosaminidase activity and is inactive toward GlcNAc-L-Asn. Likewise, has no activity toward glutamine. The sequence is that of Isoaspartyl peptidase/L-asparaginase (ASRGL1) from Homo sapiens (Human).